The primary structure comprises 635 residues: Extracellular metalloproteinase MEP (635 aa).

The signal sequence occupies residues 1–19; that stretch reads MRYSLSLALLGVAAVTVVA. The propeptide occupies 20–242; sequence HPHTPGRHGV…VHGVVDYVSH (223 aa). Position 428 (histidine 428) interacts with Zn(2+). Residue glutamate 429 is part of the active site. Histidine 432 lines the Zn(2+) pocket. N-linked (GlcNAc...) asparagine glycosylation occurs at asparagine 473.

This sequence belongs to the peptidase M36 family. The cofactor is Zn(2+).

It localises to the secreted. In terms of biological role, secreted metalloproteinase that allows assimilation of proteinaceous substrates. The polypeptide is Extracellular metalloproteinase MEP (MEP) (Pyricularia oryzae (strain 70-15 / ATCC MYA-4617 / FGSC 8958) (Rice blast fungus)).